Here is a 444-residue protein sequence, read N- to C-terminus: N-succinylarginine dihydrolase (444 aa).

Substrate-binding positions include 19-28 (SGLSVGNIAS), Asn110, and 137-138 (HR). Residue Glu174 is part of the active site. Arg214 serves as a coordination point for substrate. Residue His250 is part of the active site. Residues Asp252 and Asn362 each coordinate substrate. The active-site Nucleophile is the Cys368.

Belongs to the succinylarginine dihydrolase family. In terms of assembly, homodimer.

It catalyses the reaction N(2)-succinyl-L-arginine + 2 H2O + 2 H(+) = N(2)-succinyl-L-ornithine + 2 NH4(+) + CO2. The protein operates within amino-acid degradation; L-arginine degradation via AST pathway; L-glutamate and succinate from L-arginine: step 2/5. Functionally, catalyzes the hydrolysis of N(2)-succinylarginine into N(2)-succinylornithine, ammonia and CO(2). The chain is N-succinylarginine dihydrolase from Aliivibrio fischeri (strain MJ11) (Vibrio fischeri).